The chain runs to 529 residues: Ell-associated factor Eaf (529 aa).

Disordered stretches follow at residues 155–235 (AAGS…PMIT) and 253–529 (ANIS…DDDD). The segment covering 167 to 186 (ENSTMRISSKTKVSTGSRRN) has biased composition (polar residues). 4 stretches are compositionally biased toward low complexity: residues 194–215 (RNSP…SPQS), 256–265 (SGSSTGSSSG), 306–315 (HQNQQQQQQN), and 327–346 (QQQH…QQQQ). The residue at position 196 (serine 196) is a Phosphoserine. Over residues 347 to 359 (RASFSHSNHSNSM) the composition is skewed to polar residues. Positions 401 to 416 (DSSDTDSGSDSDDSTD) are enriched in acidic residues. 4 stretches are compositionally biased toward low complexity: residues 431–451 (HQQQ…HMHQ), 469–480 (QHQQQQQQPPQQ), 488–499 (QQQQQQQQQQQS), and 510–523 (NDLL…SSNS).

The protein belongs to the EAF family.

It localises to the nucleus. Functionally, promotes transcriptional elongation by Su(Tpl)/ELL. Essential for development. The chain is Ell-associated factor Eaf from Drosophila grimshawi (Hawaiian fruit fly).